Here is a 388-residue protein sequence, read N- to C-terminus: Ferrochelatase (388 aa).

Positions 196 and 277 each coordinate Fe cation.

Belongs to the ferrochelatase family.

Its subcellular location is the cytoplasm. The enzyme catalyses heme b + 2 H(+) = protoporphyrin IX + Fe(2+). The protein operates within porphyrin-containing compound metabolism; protoheme biosynthesis; protoheme from protoporphyrin-IX: step 1/1. Catalyzes the ferrous insertion into protoporphyrin IX. This is Ferrochelatase from Trichormus variabilis (strain ATCC 29413 / PCC 7937) (Anabaena variabilis).